The following is a 406-amino-acid chain: ATP synthase subunit a (406 aa).

Composition is skewed to low complexity over residues 22–31 (AGEHGAPAPE) and 43–59 (DAAG…AEHG). The segment at 22-76 (AGEHGAPAPEVATPAEGHGARDAAGAATDPHGAAAEHGAAAHEDPAQHGAAGAEA) is disordered. 6 helical membrane-spanning segments follow: residues 151 to 171 (KHVV…FAAV), 209 to 229 (FVPY…FGLV), 232 to 252 (AATA…TFLI), 278 to 298 (LWPL…TKPF), 304 to 324 (LFAN…LIFA), and 351 to 371 (VQAY…VAHH). Residues 375–406 (DEHEEHGHGAAATGGAHGSHGSHVAGASPGHG) form a disordered region. The segment covering 383 to 406 (GAAATGGAHGSHGSHVAGASPGHG) has biased composition (low complexity).

The protein belongs to the ATPase A chain family. F-type ATPases have 2 components, CF(1) - the catalytic core - and CF(0) - the membrane proton channel. CF(1) has five subunits: alpha(3), beta(3), gamma(1), delta(1), epsilon(1). CF(0) has three main subunits: a(1), b(2) and c(9-12). The alpha and beta chains form an alternating ring which encloses part of the gamma chain. CF(1) is attached to CF(0) by a central stalk formed by the gamma and epsilon chains, while a peripheral stalk is formed by the delta and b chains.

It is found in the cell inner membrane. Functionally, key component of the proton channel; it plays a direct role in the translocation of protons across the membrane. In Anaeromyxobacter sp. (strain Fw109-5), this protein is ATP synthase subunit a.